A 213-amino-acid chain; its full sequence is Adenylate kinase (213 aa).

10–15 (GAGKGT) lines the ATP pocket. Residues 30–59 (AVGDIFRTIIKTSTSEAELINNYVKQGALI) form an NMP region. AMP is bound by residues Arg-36, 57–59 (ALI), 85–88 (GYPR), and Gln-92. The LID stretch occupies residues 123–161 (GRYSCKNCGKIYNIHFLQPKIEHVCDVCSSSVFDYRKDD). Arg-124 serves as a coordination point for ATP. The Zn(2+) site is built by Cys-127 and Cys-130. Residue 133–134 (IY) coordinates ATP. 2 residues coordinate Zn(2+): Cys-147 and Cys-150. Arg-158 and Arg-169 together coordinate AMP. Lys-197 provides a ligand contact to ATP.

Belongs to the adenylate kinase family. As to quaternary structure, monomer.

The protein resides in the cytoplasm. The enzyme catalyses AMP + ATP = 2 ADP. It participates in purine metabolism; AMP biosynthesis via salvage pathway; AMP from ADP: step 1/1. Its function is as follows. Catalyzes the reversible transfer of the terminal phosphate group between ATP and AMP. Plays an important role in cellular energy homeostasis and in adenine nucleotide metabolism. The sequence is that of Adenylate kinase from Rickettsia prowazekii (strain Madrid E).